The chain runs to 343 residues: Zinc finger CCCH domain-containing protein 1 (343 aa).

A disordered region spans residues 1-102 (MSDSGEPKPS…PERSVFHYDS (102 aa)). Low complexity predominate over residues 7–25 (PKPSQQEEPLPQPAAQETQ). Residues 35–44 (KPTKSKNIRK) are compositionally biased toward basic residues. Low complexity predominate over residues 79–91 (SSGPSKSSTTTSG). A C3H1-type zinc finger spans residues 200-228 (DYQPDICKDYKETGYCGYGDSCKFLHDRG). A disordered region spans residues 249–268 (RNKAMGVEDEDDEADKDSDE). Positions 255–268 (VEDEDDEADKDSDE) are enriched in acidic residues. Residues 277–315 (CFICREPFVDPVVTKCKHYFCEHCALKHHTKNKKCFVCN) form an RING-type zinc finger.

This is Zinc finger CCCH domain-containing protein 1 from Arabidopsis thaliana (Mouse-ear cress).